A 1143-amino-acid polypeptide reads, in one-letter code: FH2 domain-containing protein 1 (1143 aa).

The disordered stretch occupies residues 16-89; sequence GNIATAPGFM…PPTTHMNGYS (74 aa). 2 stretches are compositionally biased toward pro residues: residues 29 to 46 and 56 to 80; these read TPPP…PSPP and SSPP…PGLP. The FH2 domain maps to 87–482; sequence GYSHLGKKKR…QLQRLKEQEQ (396 aa). Position 500 is a phosphoserine (S500). Residues 517–638 are disordered; sequence PFLHPRPISP…NHASAFPRAR (122 aa). Residues 521–534 are compositionally biased toward low complexity; that stretch reads PRPISPSSPSYRPP. Residues S650, S660, and S664 each carry the phosphoserine modification. Positions 706–1143 are disordered; it reads LESVGHRGPQ…LGRILNPLRK (438 aa). Positions 806–818 are enriched in low complexity; the sequence is GSMSSGVGEMGDS. Residues 848 to 861 are compositionally biased toward basic and acidic residues; the sequence is LPRDKPTKRKDVVA. A compositionally biased stretch (polar residues) spans 925-947; the sequence is RGPSQNPPSSTDTVWSRQNSVRR. Over residues 958 to 968 the composition is skewed to low complexity; it reads PRGSSGSSSTR. Residues 960–1086 are MTBD; microtubule-binding domain; it reads GSSGSSSTRP…DAAPKDSSTL (127 aa). Basic and acidic residues predominate over residues 995–1018; sequence QKPEENKTCRAHSEGPESPKEEPK. Residues 1036–1046 show a composition bias toward polar residues; sequence ARNTVASSSRS. Composition is skewed to basic and acidic residues over residues 1071 to 1080 and 1117 to 1130; these read VKGDPEDAAP and GAGE…KDSS.

Interacts with CEP170.

It is found in the cell projection. The protein localises to the cilium. Its subcellular location is the golgi apparatus. Microtubule-associated formin which regulates both actin and microtubule dynamics. Induces microtubule acetylation and stabilization and actin stress fiber formation. Regulates Golgi ribbon formation. Required for normal cilia assembly. Early in cilia assembly, may assist in the maturation and positioning of the centrosome/basal body, and once cilia assembly has initiated, may also promote cilia elongation by inhibiting disassembly. The polypeptide is FH2 domain-containing protein 1 (FHDC1) (Homo sapiens (Human)).